A 189-amino-acid chain; its full sequence is Crossover junction endodeoxyribonuclease RuvC (189 aa).

Active-site residues include Asp11, Glu71, and Asp143. 3 residues coordinate Mg(2+): Asp11, Glu71, and Asp143.

The protein belongs to the RuvC family. As to quaternary structure, homodimer which binds Holliday junction (HJ) DNA. The HJ becomes 2-fold symmetrical on binding to RuvC with unstacked arms; it has a different conformation from HJ DNA in complex with RuvA. In the full resolvosome a probable DNA-RuvA(4)-RuvB(12)-RuvC(2) complex forms which resolves the HJ. Mg(2+) is required as a cofactor.

It is found in the cytoplasm. The catalysed reaction is Endonucleolytic cleavage at a junction such as a reciprocal single-stranded crossover between two homologous DNA duplexes (Holliday junction).. In terms of biological role, the RuvA-RuvB-RuvC complex processes Holliday junction (HJ) DNA during genetic recombination and DNA repair. Endonuclease that resolves HJ intermediates. Cleaves cruciform DNA by making single-stranded nicks across the HJ at symmetrical positions within the homologous arms, yielding a 5'-phosphate and a 3'-hydroxyl group; requires a central core of homology in the junction. The consensus cleavage sequence is 5'-(A/T)TT(C/G)-3'. Cleavage occurs on the 3'-side of the TT dinucleotide at the point of strand exchange. HJ branch migration catalyzed by RuvA-RuvB allows RuvC to scan DNA until it finds its consensus sequence, where it cleaves and resolves the cruciform DNA. The polypeptide is Crossover junction endodeoxyribonuclease RuvC (Methylorubrum extorquens (strain CM4 / NCIMB 13688) (Methylobacterium extorquens)).